Reading from the N-terminus, the 396-residue chain is L-lactate dehydrogenase (396 aa).

The region spanning 1–380 (MIISAASDYR…SGDSLVQELG (380 aa)) is the FMN hydroxy acid dehydrogenase domain. Tyr-24 is a substrate binding site. Positions 106 and 127 each coordinate FMN. Residue Tyr-129 coordinates substrate. Thr-155 is an FMN binding site. Arg-164 contacts substrate. FMN is bound at residue Lys-251. His-275 (proton acceptor) is an active-site residue. Arg-278 contacts substrate. An FMN-binding site is contributed by 306-330 (DSGIRNGLDVVRMIALGADTVLLGR).

This sequence belongs to the FMN-dependent alpha-hydroxy acid dehydrogenase family. The cofactor is FMN.

It is found in the cell inner membrane. The enzyme catalyses (S)-lactate + A = pyruvate + AH2. Functionally, catalyzes the conversion of L-lactate to pyruvate. Is coupled to the respiratory chain. The chain is L-lactate dehydrogenase from Salmonella typhimurium (strain LT2 / SGSC1412 / ATCC 700720).